Here is a 265-residue protein sequence, read N- to C-terminus: Short chain dehydrogenase mdpC (265 aa).

Positions 25, 98, and 131 each coordinate NADP(+). Catalysis depends on proton donor residues serine 147 and serine 148. The NADP(+) site is built by tyrosine 162, lysine 166, and threonine 197. The active-site Proton acceptor is tyrosine 162. The Lowers pKa of active site Tyr role is filled by lysine 166.

Belongs to the short-chain dehydrogenases/reductases (SDR) family.

It carries out the reaction 3,8,9,10-tetrahydroxy-6-methyl-1,4-dihydroanthracen-1-one + NADPH + H(+) = (3R)-3,8,9,10-tetrahydroxy-6-methyl-1,2,3,4-tetrahydroanthracen-1-one + NADP(+). It functions in the pathway secondary metabolite biosynthesis. Short chain dehydrogenase; part of the gene cluster that mediates the biosynthesis of monodictyphenone, a prenyl xanthone derivative. The pathway begins with the synthesis of atrochrysone thioester by the polyketide synthase (PKS) mdpG. The atrochrysone carboxyl ACP thioesterase mdpF then breaks the thioester bond and releases the atrochrysone carboxylic acid from mdpG. The atrochrysone carboxylic acid is then converted to atrochrysone which is further transformed into emodin anthrone. The next step is performed by the anthrone oxygenase mdpH that catalyzes the oxidation of emodinanthrone to emodin. Emodin is further modified to yield monodictyphenone via several steps involving mdpB, mdpC mdpJ, mdpK and mdpL. The short chain dehydrogenase mdpC converts the tautomers of emodin hydroquinone into the 3-hydroxy-3,4-dihydroan-thracen-1(2H)-one derivative. These enzymes with xptA, xptB and xptC are also proposed to be involved in the synthesis of shamixanthone from emodin. Especially, direct reduction of emodin by the short chain dehydrogenase mdpC followed by dehydration catalyzed by the scytalone dehydratase-like protein mdpB gives loss of oxygen and formation of chrysophanol intermediate in two simple steps. In Emericella nidulans (strain FGSC A4 / ATCC 38163 / CBS 112.46 / NRRL 194 / M139) (Aspergillus nidulans), this protein is Short chain dehydrogenase mdpC.